Here is a 59-residue protein sequence, read N- to C-terminus: UPF0434 protein SO_2800 (59 aa).

This sequence belongs to the UPF0434 family.

This chain is UPF0434 protein SO_2800, found in Shewanella oneidensis (strain ATCC 700550 / JCM 31522 / CIP 106686 / LMG 19005 / NCIMB 14063 / MR-1).